Here is a 320-residue protein sequence, read N- to C-terminus: Cytochrome f (320 aa).

The N-terminal stretch at 1-35 is a signal peptide; sequence MQTRNTFSWIREEITRSISVSLMIYIITWASISGA. Residues tyrosine 36, cysteine 56, cysteine 59, and histidine 60 each coordinate heme. A helical membrane pass occupies residues 286-306; that stretch reads VQGLLFFLGSVVLAQIFLVLK.

It belongs to the cytochrome f family. In terms of assembly, the 4 large subunits of the cytochrome b6-f complex are cytochrome b6, subunit IV (17 kDa polypeptide, petD), cytochrome f and the Rieske protein, while the 4 small subunits are PetG, PetL, PetM and PetN. The complex functions as a dimer. The cofactor is heme.

The protein localises to the plastid. The protein resides in the chloroplast thylakoid membrane. Its function is as follows. Component of the cytochrome b6-f complex, which mediates electron transfer between photosystem II (PSII) and photosystem I (PSI), cyclic electron flow around PSI, and state transitions. The chain is Cytochrome f from Capsella bursa-pastoris (Shepherd's purse).